The sequence spans 253 residues: Phosphate import ATP-binding protein PstB (253 aa).

Residues 1–249 (MKLMDVRVSG…PRHELTKKFL (249 aa)) form the ABC transporter domain. 38-45 (GPSGSGKS) is an ATP binding site.

The protein belongs to the ABC transporter superfamily. Phosphate importer (TC 3.A.1.7) family. The complex is composed of two ATP-binding proteins (PstB), two transmembrane proteins (PstC and PstA) and a solute-binding protein (PstS).

The protein resides in the cell membrane. The enzyme catalyses phosphate(out) + ATP + H2O = ADP + 2 phosphate(in) + H(+). Functionally, part of the ABC transporter complex PstSACB involved in phosphate import. Responsible for energy coupling to the transport system. This chain is Phosphate import ATP-binding protein PstB, found in Aeropyrum pernix (strain ATCC 700893 / DSM 11879 / JCM 9820 / NBRC 100138 / K1).